A 312-amino-acid chain; its full sequence is Malate dehydrogenase (312 aa).

Residues Gly12 to Gly17 and Asp36 contribute to the NAD(+) site. Positions 87 and 93 each coordinate substrate. NAD(+)-binding positions include Asn100 and Leu123–Asn125. Asn125 contacts substrate. Ser149 is subject to Phosphoserine. Arg156 contributes to the substrate binding site. His180 acts as the Proton acceptor in catalysis.

It belongs to the LDH/MDH superfamily. MDH type 3 family.

The catalysed reaction is (S)-malate + NAD(+) = oxaloacetate + NADH + H(+). In terms of biological role, catalyzes the reversible oxidation of malate to oxaloacetate. This chain is Malate dehydrogenase, found in Bacillus cereus (strain ATCC 14579 / DSM 31 / CCUG 7414 / JCM 2152 / NBRC 15305 / NCIMB 9373 / NCTC 2599 / NRRL B-3711).